The sequence spans 291 residues: Phosphate import ATP-binding protein PstB (291 aa).

The ABC transporter domain maps to 43–286 (ANVKDLSFWY…PKHAMTEEYI (244 aa)). Residue 75-82 (GASGCGKS) participates in ATP binding.

The protein belongs to the ABC transporter superfamily. Phosphate importer (TC 3.A.1.7) family. As to quaternary structure, the complex is composed of two ATP-binding proteins (PstB), two transmembrane proteins (PstC and PstA) and a solute-binding protein (PstS).

It localises to the cell inner membrane. The enzyme catalyses phosphate(out) + ATP + H2O = ADP + 2 phosphate(in) + H(+). Part of the ABC transporter complex PstSACB involved in phosphate import. Responsible for energy coupling to the transport system. This is Phosphate import ATP-binding protein PstB from Alcaligenes faecalis.